The following is a 422-amino-acid chain: Steroid hormone receptor ERR1 (422 aa).

The disordered stretch occupies residues methionine 1–serine 66. A repressor domain region spans residues methionine 1 to lysine 76. A Glycyl lysine isopeptide (Lys-Gly) (interchain with G-Cter in SUMO) cross-link involves residue lysine 14. Phosphoserine is present on residues serine 19 and serine 22. The nuclear receptor DNA-binding region spans lysine 76–leucine 151. 2 NR C4-type zinc fingers span residues cysteine 79–cysteine 99 and cysteine 115–cysteine 134. 4 positions are modified to N6-acetyllysine; by PCAF/KAT2B: lysine 129, lysine 138, lysine 160, and lysine 162. Residue lysine 189 forms a Glycyl lysine isopeptide (Lys-Gly) (interchain with G-Cter in SUMO2) linkage. Positions proline 192–methionine 420 constitute an NR LBD domain. Lysine 402 is covalently cross-linked (Glycyl lysine isopeptide (Lys-Gly) (interchain with G-Cter in SUMO); alternate). A Glycyl lysine isopeptide (Lys-Gly) (interchain with G-Cter in SUMO2); alternate cross-link involves residue lysine 402. Positions lysine 402 to aspartate 422 are AF-2 domain.

Belongs to the nuclear hormone receptor family. NR3 subfamily. As to quaternary structure, binds DNA as a monomer or a homodimer. Interacts (via the AF2 domain) with coactivator PPARGC1A (via the L3 motif); the interaction greatly enhances transcriptional activity of genes involved in energy metabolism. Interacts with PIAS4; the interaction enhances sumoylation. Interacts with MAPK15; promotes re-localization of ESRRA to the cytoplasm through a XPO1-dependent mechanism then inhibits ESRRA transcriptional activity. Post-translationally, phosphorylation on Ser-19 enhances sumoylation on Lys-14 increasing repression of transcriptional activity. In terms of processing, sumoylated with SUMO2. Main site is Lys-14 which is enhanced by phosphorylation on Ser-19, cofactor activation, and by interaction with PIAS4. Sumoylation enhances repression of transcriptional activity, but has no effect on subcellular location nor on DNA binding. Reversibly acetylated. Acetylation by PCAF/KAT2 at Lys-129, Lys-138, Lys-160 and Lys-162 and PCAF/KAT2 decreases transcriptional activity probably by inhibiting DNA-binding activity; deacetylation involves SIRT1 and HDAC8 and increases DNA-binding. As to expression, most highly expressed in kidney, heart, and brown adipocytes. Also found in uterus, cervix and vagina.

It localises to the nucleus. It is found in the cytoplasm. Binds to an ERR-alpha response element (ERRE) containing a single consensus half-site, 5'-TNAAGGTCA-3'. Can bind to the medium-chain acyl coenzyme A dehydrogenase (MCAD) response element NRRE-1 and may act as an important regulator of MCAD promoter. Binds to the C1 region of the lactoferrin gene promoter. Requires dimerization and the coactivator, PGC-1A, for full activity. The ERRalpha/PGC1alpha complex is a regulator of energy metabolism. Induces the expression of PERM1 in the skeletal muscle. The sequence is that of Steroid hormone receptor ERR1 (Esrra) from Mus musculus (Mouse).